The following is a 66-amino-acid chain: Toxin Boma6b (66 aa).

The region spanning 2 to 64 is the LCN-type CS-alpha/beta domain; the sequence is RDAYIAQNYN…VPIKVEGKCH (63 aa). 4 disulfides stabilise this stretch: Cys12/Cys63, Cys16/Cys36, Cys22/Cys46, and Cys26/Cys48.

The protein belongs to the long (4 C-C) scorpion toxin superfamily. Sodium channel inhibitor family. Alpha subfamily. Expressed by the venom gland.

It is found in the secreted. In terms of biological role, alpha toxins bind voltage-independently at site-3 of sodium channels (Nav) and inhibit the inactivation of the activated channels, thereby blocking neuronal transmission. The protein is Toxin Boma6b of Buthus occitanus mardochei (Moroccan scorpion).